The sequence spans 51 residues: Ribosomal protein eL39-like 2 (51 aa).

Belongs to the eukaryotic ribosomal protein eL39 family. Component of a male germ cell-specific 60S large ribosomal subunit (LSU), which contains RPL10L and RPL39L, instead of RPL10 and RPL39 paralogs. The composition of the rest of the complex is similar to classical ribosomes. In terms of tissue distribution, testis specific.

The protein resides in the cytoplasm. Male germ cell-specific component of the ribosome, which is required for the formation of sperm and male fertility. Replaces the RPL39 paralog in the ribosome of male germ cells. The ribosome is a large ribonucleoprotein complex responsible for the synthesis of proteins in the cell. The male germ cell-specific ribosome displays a ribosomal polypeptide exit tunnel of distinct size and charge states compared with the classical ribosome. It is responsible for regulating the biosynthesis and folding of a subset of male germ-cell-specific proteins that are essential for the formation of sperm. In Homo sapiens (Human), this protein is Ribosomal protein eL39-like 2.